We begin with the raw amino-acid sequence, 337 residues long: F420-dependent glucose-6-phosphate dehydrogenase 2 (337 aa).

D40 contributes to the coenzyme F420-(gamma-Glu)n binding site. Catalysis depends on H41, which acts as the Proton donor. Residues T77 and 108–109 (TG) each bind coenzyme F420-(gamma-Glu)n. The Proton acceptor role is filled by E110. Coenzyme F420-(gamma-Glu)n contacts are provided by residues N113, 178 to 179 (GG), and 181 to 182 (VV). Substrate contacts are provided by T196, K199, K260, and R284.

This sequence belongs to the F420-dependent glucose-6-phosphate dehydrogenase family. In terms of assembly, homodimer.

It catalyses the reaction oxidized coenzyme F420-(gamma-L-Glu)(n) + D-glucose 6-phosphate + H(+) = 6-phospho-D-glucono-1,5-lactone + reduced coenzyme F420-(gamma-L-Glu)(n). Functionally, catalyzes the coenzyme F420-dependent oxidation of glucose 6-phosphate (G6P) to 6-phosphogluconolactone. This is F420-dependent glucose-6-phosphate dehydrogenase 2 from Rhodococcus jostii (strain RHA1).